The chain runs to 407 residues: Tyrosine--tRNA ligase 1 (407 aa).

Tyr-35 is a binding site for L-tyrosine. A 'HIGH' region motif is present at residues 40-49 (PTGDSLHVGH). 2 residues coordinate L-tyrosine: Tyr-168 and Gln-172. The 'KMSKS' region motif lies at 228 to 232 (KMGKT). Position 231 (Lys-231) interacts with ATP. In terms of domain architecture, S4 RNA-binding spans 340–406 (SSILDVLVHT…GKKKYYKIVI (67 aa)).

The protein belongs to the class-I aminoacyl-tRNA synthetase family. TyrS type 1 subfamily. In terms of assembly, homodimer.

Its subcellular location is the cytoplasm. It catalyses the reaction tRNA(Tyr) + L-tyrosine + ATP = L-tyrosyl-tRNA(Tyr) + AMP + diphosphate + H(+). Catalyzes the attachment of tyrosine to tRNA(Tyr) in a two-step reaction: tyrosine is first activated by ATP to form Tyr-AMP and then transferred to the acceptor end of tRNA(Tyr). The protein is Tyrosine--tRNA ligase 1 of Clostridium acetobutylicum (strain ATCC 824 / DSM 792 / JCM 1419 / IAM 19013 / LMG 5710 / NBRC 13948 / NRRL B-527 / VKM B-1787 / 2291 / W).